We begin with the raw amino-acid sequence, 166 residues long: uncharacterized protein (166 aa).

It to C.perfringens pCP13 PCP12.

This is an uncharacterized protein from Clostridium perfringens.